The sequence spans 49 residues: Osteocalcin (49 aa).

One can recognise a Gla domain in the interval Tyr1–Gly47. A Hydroxyproline modification is found at Pro9. Residues Glu17, Glu21, Glu24, and Asp30 each coordinate Ca(2+). Glu17, Glu21, and Glu24 each carry 4-carboxyglutamate. Residues Cys23 and Cys29 are joined by a disulfide bond.

Belongs to the osteocalcin/matrix Gla protein family. In terms of processing, gamma-carboxyglutamate residues are formed by vitamin K dependent carboxylation by GGCX. These residues are essential for the binding of calcium. Decarboxylation promotes the hormone activity.

It is found in the secreted. In terms of biological role, the carboxylated form is one of the main organic components of the bone matrix, which constitutes 1-2% of the total bone protein. It acts as a negative regulator of bone formation and is required to limit bone formation without impairing bone resorption or mineralization. The carboxylated form binds strongly to apatite and calcium. Functionally, the uncarboxylated form acts as a hormone secreted by osteoblasts, which regulates different cellular processes, such as energy metabolism, male fertility and brain development. Regulates of energy metabolism by acting as a hormone favoring pancreatic beta-cell proliferation, insulin secretion and sensitivity and energy expenditure. Uncarboxylated osteocalcin hormone also promotes testosterone production in the testes: acts as a ligand for G protein-coupled receptor GPRC6A at the surface of Leydig cells, initiating a signaling response that promotes the expression of enzymes required for testosterone synthesis in a CREB-dependent manner. Also acts as a regulator of brain development: osteocalcin hormone crosses the blood-brain barrier and acts as a ligand for GPR158 on neurons, initiating a signaling response that prevents neuronal apoptosis in the hippocampus, favors the synthesis of all monoamine neurotransmitters and inhibits that of gamma-aminobutyric acid (GABA). Osteocalcin also crosses the placenta during pregnancy and maternal osteocalcin is required for fetal brain development. The sequence is that of Osteocalcin (BGLAP) from Equus caballus (Horse).